Consider the following 286-residue polypeptide: Pyridoxal kinase PdxY (286 aa).

A substrate-binding site is contributed by Ser-8. ATP-binding residues include Asp-110 and Glu-147. Substrate is bound at residue Asp-223.

It belongs to the pyridoxine kinase family. PdxY subfamily. Homodimer. Mg(2+) is required as a cofactor.

The enzyme catalyses pyridoxal + ATP = pyridoxal 5'-phosphate + ADP + H(+). It functions in the pathway cofactor metabolism; pyridoxal 5'-phosphate salvage; pyridoxal 5'-phosphate from pyridoxal: step 1/1. In terms of biological role, pyridoxal kinase involved in the salvage pathway of pyridoxal 5'-phosphate (PLP). Catalyzes the phosphorylation of pyridoxal to PLP. The polypeptide is Pyridoxal kinase PdxY (Granulibacter bethesdensis (strain ATCC BAA-1260 / CGDNIH1)).